A 132-amino-acid chain; its full sequence is Salivary protein 15 Iper-2 (132 aa).

Residues 1-18 (MKVVCIIVLFVIVAVNES) form the signal peptide. N-linked (GlcNAc...) asparagine glycans are attached at residues asparagine 24, asparagine 36, asparagine 62, asparagine 89, and asparagine 101. Residues 113-132 (GPNGQTCADKSQCVGHIPGC) are CD4-binding.

This sequence belongs to the salp15 family. In terms of assembly, interacts with host CD4. Interacts with host DC-SIGN (CD209). As to quaternary structure, (Microbial infection) Interacts with Borrelia outer surface protein C (OspC). In terms of tissue distribution, expressed in salivary glands from feeding female ticks. Highly expressed 1 day after start of feeding, and weakly expressed at the initiation of feeding and 4 days after start of feeding.

The protein resides in the secreted. Its function is as follows. Salivary tick protein that downregulates host immune system by binding to both dendritic cells, and CD4(+) T cells. Specifically binds to the CD4 coreceptor on T cells. This interaction prevents the activation of the Src kinase, Lck, and its downstream substrate Zap-70, and results in deficient activation of PLCgamma1, the repression of calcium fluxes triggered by T-cell antigen receptor (TCR) ligation, and a subsequent reduction in interleukin-2 production. This salivary protein also binds to DC-SIGN (CD209) on dendritic cells (DC) and activates the Raf-1 kinase/MEK signaling pathway that results in down-regulating expression of pro-inflammatory cytokines. Furthermore, it inhibits T cell proliferation induced by DCs. It also inhibits in vitro keratinocyte inflammation induced by Borrelia burgdorferi or by the major outer surface protein (OspC) of Borrelia. In addition, it downregulates chemokines and monocyte chemoattractant protein 1, as well as several antimicrobial peptides such as defensins, cathelicidin, psoriasin, and RNase 7. Apart from its immunomodulatory activities, it is also associated with protection of Borrelia spirochetes from antibody-mediated killing through its binding to OspC. In vivo, tests on different immune disease animal models show promising therapeutic results, e.g., in inhibiting HIV infection, experimental autoimmune encephalomyelitis, transplantation rejection, and asthma. In terms of biological role, (Microbial infection) Protects Borrelia garinii from anti-Borrelia antibody-mediated cytotoxicity in vitro. May facilitate B.garinii transmission in mouse model. (Microbial infection) Protects Borrelia burgdorferi from anti-Borrelia antibody-mediated cytotoxicity in vitro. Functionally, (Microbial infection) Protects Borrelia afzelii from anti-Borrelia antibody-mediated cytotoxicity in vitro. This is Salivary protein 15 Iper-2 from Ixodes persulcatus (Taiga tick).